We begin with the raw amino-acid sequence, 447 residues long: UDP-glycosyltransferase 76E5 (447 aa).

UDP-alpha-D-glucose is bound by residues Ser-272, 324–326, 341–349, and 363–366; these read APQ, HCGWNSTLE, and NGEQ.

Belongs to the UDP-glycosyltransferase family.

The chain is UDP-glycosyltransferase 76E5 (UGT76E5) from Arabidopsis thaliana (Mouse-ear cress).